Here is a 108-residue protein sequence, read N- to C-terminus: uncharacterized protein (108 aa).

Residues 75 to 94 are disordered; the sequence is TPQVSSFPSSTTSLSHSCTT. Over residues 79–94 the composition is skewed to low complexity; that stretch reads SSFPSSTTSLSHSCTT.

This is an uncharacterized protein from Homo sapiens (Human).